Reading from the N-terminus, the 206-residue chain is Threonine efflux protein (206 aa).

A helical transmembrane segment spans residues 1–21; it reads MLMLFFTVAMVHIVALMSPGP. Topologically, residues 22 to 43 are periplasmic; the sequence is DFFFVSQTAVSRSRKEAMMGVL. The helical transmembrane segment at 44-64 threads the bilayer; that stretch reads GITCGVMVWAGVALLGLHLII. Topologically, residues 65 to 66 are cytoplasmic; sequence EK. Residues 67 to 87 traverse the membrane as a helical segment; sequence MAWLHTIIMVGGGLYLCWMGY. Residues 88–149 lie on the Periplasmic side of the membrane; the sequence is QMLRGALKKQ…VGDNVGAAAR (62 aa). A helical transmembrane segment spans residues 150 to 173; sequence WGIFALITLETLAWFTVVASLFAL. At 174–206 the chain is on the cytoplasmic side; the sequence is PKMRRGYQRLAKWIDGFAGALFAGFGIHLIISR.

It belongs to the Rht family.

It localises to the cell inner membrane. Conducts the efflux of threonine. The chain is Threonine efflux protein (rhtC) from Salmonella typhi.